Consider the following 266-residue polypeptide: Luciferase (266 aa).

A helical transmembrane segment spans residues 22–41 (GLATACCAVAVASAIAFPYI).

This sequence belongs to the fungal luciferase family.

The protein resides in the membrane. The enzyme catalyses 3-hydroxyhispidin + O2 = (E)-caffeoylpyruvate + hnu + CO2. It carries out the reaction 3-hydroxyhispidin + O2 = 4-[(E)-2-(3,4-dihydroxyphenyl)ethenyl]-1,7-dihydroxy-2,3,5-trioxabicyclo[2.2.2]oct-7-en-6-one. Functionally, luciferase; part of the gene cluster that mediates the fungal bioluminescence cycle. Uses the fungal luciferin 3-hydroxyhispidin as a substrate to produce an endoperoxide as a high-energy intermediate with decomposition that yields oxyluciferin (also known as caffeoylpyruvate) and light emission. The fungal bioluminescence cycle begins with the hispidin synthetase that catalyzes the formation of hispidin which is further hydroxylated by the hispidin-3-hydroxylase, yielding the fungal luciferin 3-hydroxyhispidin. The luciferase then produces an endoperoxide as a high-energy intermediate with decomposition that yields oxyluciferin and light emission. Oxyluciferin can be recycled to caffeic acid by caffeoylpyruvate hydrolase. The protein is Luciferase of Armillaria ostoyae (Armillaria root rot fungus).